A 329-amino-acid polypeptide reads, in one-letter code: MADMSPRTDTSTDDTDDNHMLEPGQLALAAASDSDRSKDKHEDQKTLRRLAQNREAARKSRLRKKAYVQQLENSRLKLTQLEQELQRARQQGIFISSSVDQTHSMSGNGALAFDMEYARWLEEHNRQINELRSAVNAHAGDNELRGVVDKIMSHYEEIFKQKGNAAKADVFHVLSGMWKTPAERCFLWLGGFRPSELLKLLSTQLEPLTEQQLSGIANLQQSSQQAEDALSQGMEALQQSLAETLAGSLGSSGSTGNVANYMGQMAMAMGKLGTLENFLRQADNLRQQTLQQMQRILTTRQSARALLVISDYSSRLRALSSLWLARPKE.

The disordered stretch occupies residues 1–48; that stretch reads MADMSPRTDTSTDDTDDNHMLEPGQLALAAASDSDRSKDKHEDQKTLR. Residues 33 to 46 are compositionally biased toward basic and acidic residues; the sequence is DSDRSKDKHEDQKT. One can recognise a bZIP domain in the interval 43–87; that stretch reads DQKTLRRLAQNREAARKSRLRKKAYVQQLENSRLKLTQLEQELQR. The basic motif stretch occupies residues 45 to 65; it reads KTLRRLAQNREAARKSRLRKK. The leucine-zipper stretch occupies residues 71–85; that stretch reads LENSRLKLTQLEQEL. The 217-residue stretch at 110 to 326 folds into the DOG1 domain; that stretch reads ALAFDMEYAR…RALSSLWLAR (217 aa).

The protein belongs to the bZIP family. Interacts with NPR1/NH1 and NPR3/NH3.

The protein localises to the nucleus. Transcriptional regulator involved in defense response. This chain is Transcription factor TGA2.3, found in Oryza sativa subsp. japonica (Rice).